The primary structure comprises 1256 residues: Splicing factor, arginine/serine-rich 19 (1256 aa).

6 disordered regions span residues 1–33 (MEEE…SPSA), 158–343 (GKTV…APRR), 371–395 (ALSL…PEEE), 408–1030 (PRQP…TLPP), 1112–1152 (GSLP…DKYL), and 1221–1256 (FRKH…LPPL). Over residues 7–27 (SRGKTEESGEDRGDGPPDRDP) the composition is skewed to basic and acidic residues. Low complexity predominate over residues 192-206 (SSASSSPSPSPSSSS). The span at 207-222 (PSPPPPPPPPPPPALP) shows a compositional bias: pro residues. A compositionally biased stretch (basic and acidic residues) spans 227-236 (DIYDPFHPTD). Phosphoserine is present on Ser240. Residues 255 to 265 (TGSNPSSSAGT) show a composition bias toward polar residues. The segment covering 268–282 (PEEEEEEEEEEEEEG) has biased composition (acidic residues). Thr328 is modified (phosphothreonine). Acidic residues predominate over residues 382-393 (PEIEEGEIVQPE). Low complexity predominate over residues 412 to 424 (PASVATLASVAAP). Phosphoserine is present on residues Ser442 and Ser447. Basic residues predominate over residues 478-489 (KILTQRRERYRQ). Phosphoserine is present on residues Ser491, Ser493, Ser510, Ser518, and Ser520. Composition is skewed to basic residues over residues 538–553 (TARR…RSRS) and 560–577 (RGGH…RRRS). Phosphoserine is present on residues Ser577 and Ser579. Over residues 592–611 (RERHRGKRREGGKKKKKRSR) the composition is skewed to basic residues. A compositionally biased stretch (basic and acidic residues) spans 612–623 (SRAEKRSGDLEK). The residue at position 663 (Thr663) is a Phosphothreonine. Residues Ser676 and Ser682 each carry the phosphoserine modification. Tyr689 carries the phosphotyrosine modification. Ser691 and Ser695 each carry phosphoserine. Basic and acidic residues-rich tracts occupy residues 696–709 (ADER…DRRR) and 719–741 (SREK…DRSS). 2 stretches are compositionally biased toward low complexity: residues 752-775 (PGSG…SCSS) and 793-804 (SSTTPAKDSSSS). A Glycyl lysine isopeptide (Lys-Gly) (interchain with G-Cter in SUMO2) cross-link involves residue Lys812. Basic and acidic residues predominate over residues 813 to 831 (FSRDRESRSPFLKPDERAP). Phosphoserine occurs at positions 819 and 821. Positions 843-875 (KPKKTKAKAKAGAKKAKGTKGKTKPSKTRKKVR) are enriched in basic residues. Residues Ser876, Ser883, Ser910, and Ser912 each carry the phosphoserine modification. Over residues 922–935 (STPPPKVAPPPPAL) the composition is skewed to pro residues. Residues Thr923 and Thr936 each carry the phosphothreonine modification. Polar residues predominate over residues 938–947 (DSQTVDSSCK). Position 939 is a phosphoserine (Ser939). Residue Thr948 is modified to Phosphothreonine. Residues 969 to 984 (EEEEEEEEEEEEEEEQ) are compositionally biased toward acidic residues. A compositionally biased stretch (low complexity) spans 985–1017 (QPATTTATSTAAAAPSTAPSAGSTAGDSGAEDG). A necessary for interaction with the CTD domain of POLR2A region spans residues 1131 to 1256 (PASDKREGSS…GGPGLPLPPL (126 aa)). The span at 1133 to 1152 (SDKREGSSSSEGRGDTDKYL) shows a compositional bias: basic and acidic residues. Pro residues predominate over residues 1244 to 1256 (PDKGGPGLPLPPL).

The protein belongs to the splicing factor SR family. Interacts with POLR2A.

Its subcellular location is the nucleus. Its function is as follows. May function in pre-mRNA splicing. This Mus musculus (Mouse) protein is Splicing factor, arginine/serine-rich 19 (Scaf1).